The following is a 441-amino-acid chain: Ribosomal protein uS12 methylthiotransferase RimO (441 aa).

An MTTase N-terminal domain is found at 8–118 (PKIGFVSLGC…VLQHVHHYVP (111 aa)). Residues C17, C53, C82, C150, C154, and C157 each coordinate [4Fe-4S] cluster. The Radical SAM core domain occupies 136 to 373 (LTPRHYAYLK…MALQQQISAE (238 aa)). A TRAM domain is found at 376-441 (QEKVGREILV…DEYDLWGSLV (66 aa)).

This sequence belongs to the methylthiotransferase family. RimO subfamily. [4Fe-4S] cluster is required as a cofactor.

It is found in the cytoplasm. It carries out the reaction L-aspartate(89)-[ribosomal protein uS12]-hydrogen + (sulfur carrier)-SH + AH2 + 2 S-adenosyl-L-methionine = 3-methylsulfanyl-L-aspartate(89)-[ribosomal protein uS12]-hydrogen + (sulfur carrier)-H + 5'-deoxyadenosine + L-methionine + A + S-adenosyl-L-homocysteine + 2 H(+). Functionally, catalyzes the methylthiolation of an aspartic acid residue of ribosomal protein uS12. The chain is Ribosomal protein uS12 methylthiotransferase RimO from Cronobacter sakazakii (strain ATCC BAA-894) (Enterobacter sakazakii).